Reading from the N-terminus, the 224-residue chain is Putative gastrointestinal growth factor xP4 (224 aa).

The first 17 residues, 1–17, serve as a signal peptide directing secretion; it reads MANSVFWAIAVALVLGA. 4 P-type domains span residues 25–68, 73–117, 123–167, and 173–216; these read YRCG…YTPW, TICN…YQPI, RDCS…FKPE, and LQCA…FYPD. Disulfide bonds link Cys-27/Cys-53, Cys-37/Cys-52, Cys-47/Cys-64, Cys-75/Cys-102, Cys-86/Cys-101, Cys-96/Cys-113, Cys-125/Cys-152, Cys-136/Cys-151, Cys-146/Cys-163, Cys-175/Cys-201, Cys-185/Cys-200, and Cys-195/Cys-212. N-linked (GlcNAc...) asparagine glycosylation occurs at Asn-104.

Glycosylated. In terms of tissue distribution, stomach mucosa.

It localises to the secreted. In terms of biological role, may act as a growth factor. This is Putative gastrointestinal growth factor xP4 (p4) from Xenopus laevis (African clawed frog).